The following is a 409-amino-acid chain: MHELVLSGRFVLNGEIVGGSIGIDNGLITEISRRDIKGEEVIAFKSEIILPGLIDTHVHLRDFEQKEKETVESGTKAALHGGITAVFDMPNTKPPIMDVKTFEKRLSILEKHAYSDYAASFLLAGNCGEASRARADFYKIFMGASTGGIFSENFESDYSCAPGIVSVHAEDPETIRENPERPPEAEIRAIKKALTAAEKLRKPLNVCHVSTVGGIEAIIKKNLPWVSFEVTPHHLFLTSKDFERNPLLKVYPPLRSEEHRKALWENFSRIPIIASDHAPHTIEDKEAGAAGIPGLETEVALLLDAANRGLITVFDIVEKMHDNPVRFFGIKGRDFSLGNEATFTIIDPKKEWKVKPEEFYTKAKWSPWEGKKLKGKVVMTVIRGMVVMEGDEIIEEPKGVRLDVQGGNH.

Zn(2+) contacts are provided by histidine 57 and histidine 59. Substrate is bound by residues 59-61 (HLR) and asparagine 91. Zn(2+) is bound by residues lysine 139, histidine 168, histidine 208, and aspartate 276. N6-carboxylysine is present on lysine 139. Residue aspartate 276 is part of the active site. Substrate-binding positions include histidine 280 and 290 to 291 (AG).

The protein belongs to the metallo-dependent hydrolases superfamily. DHOase family. Class I DHOase subfamily. Zn(2+) serves as cofactor.

The enzyme catalyses (S)-dihydroorotate + H2O = N-carbamoyl-L-aspartate + H(+). Its pathway is pyrimidine metabolism; UMP biosynthesis via de novo pathway; (S)-dihydroorotate from bicarbonate: step 3/3. Catalyzes the reversible cyclization of carbamoyl aspartate to dihydroorotate. This Thermococcus kodakarensis (strain ATCC BAA-918 / JCM 12380 / KOD1) (Pyrococcus kodakaraensis (strain KOD1)) protein is Dihydroorotase.